A 130-amino-acid polypeptide reads, in one-letter code: MLDWRLASTHFILAMIVMLWGSGKAFSVDLASQEFGTASLQSPPTAREEKSATELSAKLLRLDDLVSLENDVFETKKKRSFSGFGSPLDRLSAGSVEHRGKQRKAVDHSKKRFGIPMDRIGRNRLSSSRG.

An N-terminal signal peptide occupies residues 1 to 25; sequence MLDWRLASTHFILAMIVMLWGSGKA. Arginine amide is present on R129.

The protein belongs to the Osteocrin family. As to quaternary structure, interacts with NPR3. As to expression, expressed in skeletal muscle and to a much lesser extent in bone, brown adipose tissue, spleen and testis. Not expressed in neurons.

The protein resides in the secreted. Functionally, hormone that acts as a ligand for natriuretic peptide receptor NPR3/NPR-C and promotes bone growth and physical endurance in muscle. Acts as a regulator of osteoblast differentiation and bone growth by binding to natriuretic peptide receptor NPR3/NPR-C, thereby preventing binding between NPR3/NPR-C and natriuretic peptides, leading to increase cGMP production. Required to enhance physical endurance: induced following physical exercise in muscle and promotes cGMP production, probably by interacting with NPR3/NPR-C. May act as an autocrine and paracrine factor linked to glucose metabolism in skeletal muscle. The chain is Osteocrin from Mus musculus (Mouse).